The sequence spans 457 residues: UDP-glycosyltransferase 72C1 (457 aa).

Residues Ser272, 343–344 (WA), 361–369 (HCGWNSVLE), and 383–386 (YSEQ) each bind UDP-alpha-D-glucose.

This sequence belongs to the UDP-glycosyltransferase family.

The sequence is that of UDP-glycosyltransferase 72C1 (UGT72C1) from Arabidopsis thaliana (Mouse-ear cress).